We begin with the raw amino-acid sequence, 596 residues long: Aspartate--tRNA(Asp/Asn) ligase (596 aa).

Glu175 serves as a coordination point for L-aspartate. The tract at residues 199–202 (QQYK) is aspartate. Residues Arg221 and His454 each coordinate L-aspartate. 221-223 (RDE) contacts ATP. Glu488 is an ATP binding site. Arg495 provides a ligand contact to L-aspartate. Position 540–543 (540–543 (GIDR)) interacts with ATP.

Belongs to the class-II aminoacyl-tRNA synthetase family. Type 1 subfamily. In terms of assembly, homodimer.

Its subcellular location is the cytoplasm. The catalysed reaction is tRNA(Asx) + L-aspartate + ATP = L-aspartyl-tRNA(Asx) + AMP + diphosphate. Its function is as follows. Aspartyl-tRNA synthetase with relaxed tRNA specificity since it is able to aspartylate not only its cognate tRNA(Asp) but also tRNA(Asn). Reaction proceeds in two steps: L-aspartate is first activated by ATP to form Asp-AMP and then transferred to the acceptor end of tRNA(Asp/Asn). This is Aspartate--tRNA(Asp/Asn) ligase from Rhizobium johnstonii (strain DSM 114642 / LMG 32736 / 3841) (Rhizobium leguminosarum bv. viciae).